We begin with the raw amino-acid sequence, 756 residues long: Catalase-peroxidase (756 aa).

The tryptophyl-tyrosyl-methioninium (Trp-Tyr) (with M-270) cross-link spans 91–244 (WHSAGTYRTG…LAAVQMGLIY (154 aa)). His92 (proton acceptor) is an active-site residue. The segment at 198-230 (AQKKMQQPGDGTLVAEPENHANEESRTASGERN) is disordered. Over residues 214-223 (PENHANEESR) the composition is skewed to basic and acidic residues. The tryptophyl-tyrosyl-methioninium (Tyr-Met) (with W-91) cross-link spans 244 to 270 (YVNPEGPEGVPDPVASARDIRETFGRM). Residue His285 participates in heme b binding.

It belongs to the peroxidase family. Peroxidase/catalase subfamily. In terms of assembly, homodimer or homotetramer. Heme b serves as cofactor. Formation of the three residue Trp-Tyr-Met cross-link is important for the catalase, but not the peroxidase activity of the enzyme.

The catalysed reaction is H2O2 + AH2 = A + 2 H2O. It carries out the reaction 2 H2O2 = O2 + 2 H2O. Functionally, bifunctional enzyme with both catalase and broad-spectrum peroxidase activity. This Pseudomonas syringae pv. syringae (strain B728a) protein is Catalase-peroxidase.